The primary structure comprises 528 residues: Low affinity inorganic phosphate transporter 4 (528 aa).

Over 1 to 18 (MGLEVLEALDSARTQWYH) the chain is Cytoplasmic. Residues 19 to 39 (VTAIVIAGMGFFTDAYDLFCI) form a helical membrane-spanning segment. Residues 40-68 (STVSKLLGRLYYFDPSTNKPGKLPPSVNN) lie on the Extracellular side of the membrane. The chain crosses the membrane as a helical span at residues 69-89 (VVTGVALVGTLSGQLVFGWLG). Over 90-96 (DKLGRKK) the chain is Cytoplasmic. A helical membrane pass occupies residues 97–117 (VYGVTLIIMVACAICSGLSFG). The Extracellular portion of the chain corresponds to 118-122 (SSAKS). A helical membrane pass occupies residues 123–143 (VMITLCFFRFWLGFGIGGDYP). At 144 to 158 (LSATIMSEYANKRTR) the chain is on the cytoplasmic side. A helical transmembrane segment spans residues 159 to 179 (GAFIAAVFAMQGVGIIFAGLV). The Extracellular portion of the chain corresponds to 180–208 (SMVFSGIFKAYYQAPRFNEDPILSTQPEG). The helical transmembrane segment at 209–229 (DLLWRLILMIGAVPAAMTYYW) threads the bilayer. Residues 230 to 292 (RMKMPETGRY…SEFFNRHGRH (63 aa)) are Cytoplasmic-facing. The chain crosses the membrane as a helical span at residues 293–313 (LIGTMSCWFLLDIAFYSQNLT). Topologically, residues 314-341 (QKDIYPAMGLIRQDKEMNAIDEVFQTSR) are extracellular. Residues 342-362 (AMFVVALFGTFPGYWFTVFFI) form a helical membrane-spanning segment. Residues 363–371 (EKLGRFKIQ) lie on the Cytoplasmic side of the membrane. Residues 372-392 (LVGFFMMSFFMFVIGVKYEYL) traverse the membrane as a helical segment. Residues 393-401 (KDENKNLFA) lie on the Extracellular side of the membrane. The helical transmembrane segment at 402-422 (LLYGLTFFFANFGPNSTTFVL) threads the bilayer. The Cytoplasmic segment spans residues 423 to 433 (PAELFPTRVRS). The chain crosses the membrane as a helical span at residues 434-454 (TCHAFSAASGKAGAMVGAFGI). Topologically, residues 455–468 (QYYTLDGTPRKIRR) are extracellular. Residues 469 to 489 (AMMILAFTNLIGFFCTFLVTE) form a helical membrane-spanning segment. Residues 490–528 (TKGRSLEEISGEDGRESELTATPNDRAPGIRQDSRTEKM) are Cytoplasmic-facing. Over residues 497 to 507 (EISGEDGRESE) the composition is skewed to basic and acidic residues. The tract at residues 497-528 (EISGEDGRESELTATPNDRAPGIRQDSRTEKM) is disordered.

This sequence belongs to the major facilitator superfamily. Phosphate:H(+) symporter (TC 2.A.1.9) family. As to expression, mostly expressed in mycorrhizal roots. Also observed in root tips of non-mycorrhizal roots, in a phosphate (Pi) depended-manner, highest expression levels being observed in low Pi conditions.

It is found in the cell membrane. It catalyses the reaction phosphate(in) + H(+)(in) = phosphate(out) + H(+)(out). Functionally, low-affinity transporter for external inorganic phosphate (Pi) probably involved in the acquisition of phosphate released by arbuscular mycorrhizal (AM) fungi (e.g. Gigaspora gigantea, Glomus versiforme and G.intraradices) during AM symbiosis; required for propper mycorrhizal arbuscule morphology. Acts as a Pi-sensing machinery at the root tip level, independently of AM fungi, involved in the regulation of early root branching and lateral roots formation. This chain is Low affinity inorganic phosphate transporter 4, found in Medicago truncatula (Barrel medic).